A 250-amino-acid polypeptide reads, in one-letter code: MSVHLLIVDALNLIRRIHAVQGASCLAACGHALSQLILHCTPSHAVAVFDDDERHESWRHQQLPQYKSGRAPIPEDLQALMPAIRAEFNRQSVTCWHASGFEADDIAATLAIKVAAGGHRVTLVSTDKGYCQLLSPSIQIRDYFQKRWLDMPFVMRHFGVQPQQLTDFWGLAGVSSSKIPGVAGIGPKSAAQLISEAGTLEALYQRLAQLPEKWRHRLEHDRDLAFLCRRIVTLDTAVTLQGNLQQLRLR.

A Mg(2+)-binding site is contributed by D104. A 5'-3' exonuclease domain is found at 160-249 (VQPQQLTDFW…LQGNLQQLRL (90 aa)). K(+) is bound by residues L171, A172, P180, V182, and I185. Positions 184 to 189 (GIGPKS) are interaction with DNA.

The protein belongs to the Xni family. Mg(2+) is required as a cofactor. It depends on K(+) as a cofactor.

Has flap endonuclease activity. During DNA replication, flap endonucleases cleave the 5'-overhanging flap structure that is generated by displacement synthesis when DNA polymerase encounters the 5'-end of a downstream Okazaki fragment. This chain is Flap endonuclease Xni, found in Sodalis glossinidius (strain morsitans).